Here is a 444-residue protein sequence, read N- to C-terminus: Methylenetetrahydrofolate--tRNA-(uracil-5-)-methyltransferase TrmFO (444 aa).

An FAD-binding site is contributed by 10–15 (GAGLAG).

This sequence belongs to the MnmG family. TrmFO subfamily. It depends on FAD as a cofactor.

Its subcellular location is the cytoplasm. It catalyses the reaction uridine(54) in tRNA + (6R)-5,10-methylene-5,6,7,8-tetrahydrofolate + NADH + H(+) = 5-methyluridine(54) in tRNA + (6S)-5,6,7,8-tetrahydrofolate + NAD(+). It carries out the reaction uridine(54) in tRNA + (6R)-5,10-methylene-5,6,7,8-tetrahydrofolate + NADPH + H(+) = 5-methyluridine(54) in tRNA + (6S)-5,6,7,8-tetrahydrofolate + NADP(+). Catalyzes the folate-dependent formation of 5-methyl-uridine at position 54 (M-5-U54) in all tRNAs. This chain is Methylenetetrahydrofolate--tRNA-(uracil-5-)-methyltransferase TrmFO, found in Streptococcus uberis (strain ATCC BAA-854 / 0140J).